Reading from the N-terminus, the 824-residue chain is Probable receptor-like protein kinase At5g24010 (824 aa).

The N-terminal stretch at 1–24 (MAFPINLTQTLLFFFCPLLHLSFA) is a signal peptide. Residues N6, N41, N204, N227, and N291 are each glycosylated (N-linked (GlcNAc...) asparagine). Topologically, residues 25 to 406 (AFTPTDNYLI…SSEVVSGKRN (382 aa)) are extracellular. The helical transmembrane segment at 407 to 427 (VVWIVVGSVLGGFVFLSLFFL) threads the bilayer. The Cytoplasmic segment spans residues 428-824 (SVLCLCRRKN…FSQLMTNAGR (397 aa)). The interval 440-467 (TRSSESTGWTPLRRFRGSSNSRTTERTV) is disordered. A compositionally biased stretch (polar residues) spans 456-467 (GSSNSRTTERTV). Positions 489–764 (FDRSLVIGVG…VLWNLEHVLQ (276 aa)) constitute a Protein kinase domain. Residues 495-503 (IGVGGFGMV) and K517 each bind ATP. D613 functions as the Proton acceptor in the catalytic mechanism. Residues 777–803 (DYGDVTDPRTARQGLSNGSNIERDYGD) form a disordered region.

The protein belongs to the protein kinase superfamily. Ser/Thr protein kinase family.

The protein resides in the membrane. In Arabidopsis thaliana (Mouse-ear cress), this protein is Probable receptor-like protein kinase At5g24010.